A 1823-amino-acid chain; its full sequence is AF4/FMR2 family member lilli (1823 aa).

Positions M1–N41 are enriched in low complexity. Disordered regions lie at residues M1–I87, G126–I305, Q422–Y544, A570–S626, D686–G712, P753–T1057, A1071–R1287, A1322–T1350, F1413–L1448, E1480–S1531, T1547–L1567, and G1715–Q1744. Positions R53–N79 are enriched in basic and acidic residues. 3 stretches are compositionally biased toward low complexity: residues G126–S147, Q156–Q174, and P205–P249. A compositionally biased stretch (pro residues) spans P426–I438. At T434 the chain carries Phosphothreonine. Basic and acidic residues predominate over residues L441–S454. The segment covering L456–D466 has biased composition (acidic residues). A phosphoserine mark is found at S463 and S465. Low complexity predominate over residues S475–Q531. Residues A582–S598 show a composition bias toward gly residues. A compositionally biased stretch (low complexity) spans S599–N612. Low complexity predominate over residues S764 to S785. Polar residues predominate over residues H818–L827. The span at P839–M849 shows a compositional bias: basic residues. A phosphoserine mark is found at S859 and S860. 5 stretches are compositionally biased toward low complexity: residues A877–A906, Q917–A947, G962–G979, A1002–T1057, and N1102–Q1161. Positions K908–Q920 form a DNA-binding region, a.T hook. S939 and S941 each carry phosphoserine. Residues T1172–L1181 show a composition bias toward polar residues. Low complexity-rich tracts occupy residues S1182 to S1203 and Q1253 to Q1280. The segment covering T1334–S1344 has biased composition (polar residues). Positions E1480 to R1496 are enriched in polar residues. At S1486 the chain carries Phosphoserine. Positions Q1497 to S1531 are enriched in low complexity. Residues T1555–P1565 show a composition bias toward pro residues. The span at G1715 to N1735 shows a compositional bias: low complexity.

It belongs to the AF4 family.

The protein localises to the nucleus. Has a role in transcriptional regulation. Acts in parallel with the Ras/MAPK and the PI3K/PKB pathways in the control of cell identity and cellular growth. Essential for regulation of the cytoskeleton and cell growth but not for cell proliferation or growth rate. Required specifically for the microtubule-based basal transport of lipid droplets. Plays a partially redundant function downstream of Raf in cell fate specification in the developing eye. Pair-rule protein that regulates embryonic cellularization, gastrulation and segmentation. This is AF4/FMR2 family member lilli from Drosophila virilis (Fruit fly).